Consider the following 486-residue polypeptide: L-arabinose isomerase (486 aa).

Glutamate 299, glutamate 324, histidine 341, and histidine 440 together coordinate Mn(2+).

This sequence belongs to the arabinose isomerase family. The cofactor is Mn(2+).

The enzyme catalyses beta-L-arabinopyranose = L-ribulose. Its pathway is carbohydrate degradation; L-arabinose degradation via L-ribulose; D-xylulose 5-phosphate from L-arabinose (bacterial route): step 1/3. In terms of biological role, catalyzes the conversion of L-arabinose to L-ribulose. The sequence is that of L-arabinose isomerase from Shouchella clausii (strain KSM-K16) (Alkalihalobacillus clausii).